A 250-amino-acid chain; its full sequence is Phosphoribosylaminoimidazole-succinocarboxamide synthase (250 aa).

The protein belongs to the SAICAR synthetase family.

The enzyme catalyses 5-amino-1-(5-phospho-D-ribosyl)imidazole-4-carboxylate + L-aspartate + ATP = (2S)-2-[5-amino-1-(5-phospho-beta-D-ribosyl)imidazole-4-carboxamido]succinate + ADP + phosphate + 2 H(+). It functions in the pathway purine metabolism; IMP biosynthesis via de novo pathway; 5-amino-1-(5-phospho-D-ribosyl)imidazole-4-carboxamide from 5-amino-1-(5-phospho-D-ribosyl)imidazole-4-carboxylate: step 1/2. This chain is Phosphoribosylaminoimidazole-succinocarboxamide synthase, found in Bifidobacterium longum subsp. infantis (strain ATCC 15697 / DSM 20088 / JCM 1222 / NCTC 11817 / S12).